The sequence spans 223 residues: FAD-dependent monooxygenase imqC (223 aa).

FAD-binding positions include 139 to 141, Tyr-189, and Asp-210; that span reads RFY.

Belongs to the PheA/TfdB FAD monooxygenase family.

It participates in secondary metabolite biosynthesis. FAD-dependent monooxygenase; part of the gene cluster that mediates the biosynthesis of imizoquins A to D, tripeptide-derived alkaloids that serve a protective role against oxidative stress that are essential for normal germination. ImqB is a canonical three-module NRPS that assembles the tripeptide backbone of the imizoquins via condensation of Trp, Tyr, and Leu-derived precursors. N-methylation by imqF and phenol oxidation by imqC, followed by cyclization via the FAD-dependent oxidase imqH carry out the three-step transformation of L-tyrosine into tetrahydroisoquinoline. Importantly, this sequence requires the presence of a free amine in the tyrosine moiety, indicating that isoquinoline formation occurs prior to peptide bond formation. The imidazolidin-4-one ring of imizoquins could form following additional oxidation of the methyl-derived bridgehead carbon by imqH. Lastly, O-methylation by imqG and leucine hydroxylation by imqE complete biosynthesis of the imizoquins. The sequence is that of FAD-dependent monooxygenase imqC from Aspergillus flavus (strain ATCC 200026 / FGSC A1120 / IAM 13836 / NRRL 3357 / JCM 12722 / SRRC 167).